The primary structure comprises 171 residues: Co-chaperone protein HscB homolog (171 aa).

A J domain is found at 2–74 (NHFELFGLPP…ISRAEYLLSQ (73 aa)).

This sequence belongs to the HscB family. Interacts with HscA and stimulates its ATPase activity.

Functionally, co-chaperone involved in the maturation of iron-sulfur cluster-containing proteins. Seems to help targeting proteins to be folded toward HscA. In Vibrio vulnificus (strain YJ016), this protein is Co-chaperone protein HscB homolog.